Consider the following 457-residue polypeptide: Argininosuccinate lyase (457 aa).

This sequence belongs to the lyase 1 family. Argininosuccinate lyase subfamily.

The protein localises to the cytoplasm. It carries out the reaction 2-(N(omega)-L-arginino)succinate = fumarate + L-arginine. The protein operates within amino-acid biosynthesis; L-arginine biosynthesis; L-arginine from L-ornithine and carbamoyl phosphate: step 3/3. This Klebsiella pneumoniae (strain 342) protein is Argininosuccinate lyase.